The chain runs to 308 residues: Methionine synthase (308 aa).

The Zn(2+) site is built by His192, Cys194, Glu215, and Cys282.

The protein belongs to the archaeal MetE family. It depends on Zn(2+) as a cofactor.

It participates in amino-acid biosynthesis; L-methionine biosynthesis via de novo pathway. Catalyzes the transfer of a methyl group to L-homocysteine resulting in methionine formation. Can use methylcobalamin and methylcobinamide as methyl donors, but methylcobalamin is not considered to be the physiological substrate. This is Methionine synthase from Methanocaldococcus jannaschii (strain ATCC 43067 / DSM 2661 / JAL-1 / JCM 10045 / NBRC 100440) (Methanococcus jannaschii).